The following is a 317-amino-acid chain: Inactive serine protease 45 (317 aa).

Residues 1–35 form the signal peptide; the sequence is MATSLRGLDAGPGSLRRWILICFAALLLLPPRPNL. Residue N40 is glycosylated (N-linked (GlcNAc...) asparagine). The Peptidase S1 domain maps to 44–291; sequence PVCGTPWWPD…YTIWIKDQVS (248 aa). A disulfide bridge connects residues C75 and C91. The N-linked (GlcNAc...) asparagine glycan is linked to N110. 3 cysteine pairs are disulfide-bonded: C172–C249, C207–C230, and C239–C267. Residue N272 is glycosylated (N-linked (GlcNAc...) asparagine).

It belongs to the peptidase S1 family.

The protein resides in the secreted. This Mus musculus (Mouse) protein is Inactive serine protease 45.